A 392-amino-acid chain; its full sequence is Riboflavin biosynthesis protein PYRD, chloroplastic (392 aa).

Residues 1-26 (MASSLVSRPHLTQRPVRAATLASATR) constitute a chloroplast transit peptide. One can recognise a CMP/dCMP-type deaminase domain in the interval 46-168 (LDDAHYMRRC…KLQGAGISVR (123 aa)). Zn(2+) is bound at residue H95. The Proton donor role is filled by E97. Zn(2+)-binding residues include C120 and C129.

It depends on Zn(2+) as a cofactor.

It is found in the plastid. The protein resides in the chloroplast. The catalysed reaction is 2,5-diamino-6-hydroxy-4-(5-phosphoribosylamino)-pyrimidine + H2O + H(+) = 5-amino-6-(5-phospho-D-ribosylamino)uracil + NH4(+). The protein operates within cofactor biosynthesis; riboflavin biosynthesis; 5-amino-6-(D-ribitylamino)uracil from GTP: step 2/4. In terms of biological role, monofunctional pyrimidine deaminase involved in the riboflavin biosynthesis pathway. Also has a reductase domain that lacks catalytically essential substrate-binding residues. This chain is Riboflavin biosynthesis protein PYRD, chloroplastic (PYRD), found in Zea mays (Maize).